The chain runs to 294 residues: Cytidine deaminase (294 aa).

2 consecutive CMP/dCMP-type deaminase domains span residues 48 to 168 (DEDA…FGPK) and 186 to 294 (LTGD…VLLG). 89-91 (NME) lines the substrate pocket. His-102 serves as a coordination point for Zn(2+). The active-site Proton donor is Glu-104. The Zn(2+) site is built by Cys-129 and Cys-132.

It belongs to the cytidine and deoxycytidylate deaminase family. As to quaternary structure, homodimer. Requires Zn(2+) as cofactor.

It carries out the reaction cytidine + H2O + H(+) = uridine + NH4(+). It catalyses the reaction 2'-deoxycytidine + H2O + H(+) = 2'-deoxyuridine + NH4(+). Functionally, this enzyme scavenges exogenous and endogenous cytidine and 2'-deoxycytidine for UMP synthesis. The chain is Cytidine deaminase from Salmonella dublin (strain CT_02021853).